We begin with the raw amino-acid sequence, 946 residues long: Inter-alpha-trypsin inhibitor heavy chain H2 (946 aa).

Residues 1-18 (MQRPVCLLIWLFLLEAQA) form the signal peptide. A propeptide spanning residues 19-54 (FEIPINGNSEFAEYSDLVELAPDKLPFVQENGRHQR) is cleaved from the precursor. Residues 56 to 185 (LPEESGEETD…KVQFELHYQE (130 aa)) form the VIT domain. Ser60 is subject to Phosphoserine. Residues Asn118 and Asn263 are each glycosylated (N-linked (GlcNAc...) asparagine). A 4-carboxyglutamate mark is found at Glu282 and Glu283. One can recognise a VWFA domain in the interval 308–468 (PKNILFVIDV…YDFLKRLSNE (161 aa)). A glycan (N-linked (GlcNAc...) asparagine) is linked at Asn445. Ser466 is modified (phosphoserine). Position 702 is an aspartate 1-(chondroitin 4-sulfate)-ester (Asp702). The propeptide occupies 703 to 946 (PHFIIYLPKS…PQLYSFLKRP (244 aa)). The residue at position 886 (Ser886) is a Phosphoserine.

It belongs to the ITIH family. I-alpha-I plasma protease inhibitors are assembled from one or two heavy chains (HC) and one light chain, bikunin. Inter-alpha-inhibitor (I-alpha-I) is composed of ITIH1/HC1, ITIH2/HC2 and bikunin. Post-translationally, heavy chains are linked to bikunin via chondroitin 4-sulfate esterified to the alpha-carboxyl of the C-terminal aspartate after propeptide cleavage. In terms of processing, phosphorylated by FAM20C in the extracellular medium. In terms of tissue distribution, expressed in both liver and brain.

The protein resides in the secreted. Its function is as follows. May act as a carrier of hyaluronan in serum or as a binding protein between hyaluronan and other matrix protein, including those on cell surfaces in tissues to regulate the localization, synthesis and degradation of hyaluronan which are essential to cells undergoing biological processes. This chain is Inter-alpha-trypsin inhibitor heavy chain H2 (Itih2), found in Mus musculus (Mouse).